The following is a 214-amino-acid chain: Phosphoenolpyruvate guanylyltransferase (214 aa).

Phosphoenolpyruvate-binding residues include Thr-139, Gly-155, and Ser-158.

Belongs to the CofC family.

The enzyme catalyses phosphoenolpyruvate + GTP + H(+) = enolpyruvoyl-2-diphospho-5'-guanosine + diphosphate. The protein operates within cofactor biosynthesis; coenzyme F420 biosynthesis. In terms of biological role, guanylyltransferase that catalyzes the activation of phosphoenolpyruvate (PEP) as enolpyruvoyl-2-diphospho-5'-guanosine, via the condensation of PEP with GTP. It is involved in the biosynthesis of coenzyme F420, a hydride carrier cofactor. The sequence is that of Phosphoenolpyruvate guanylyltransferase from Salinispora arenicola (strain CNS-205).